Reading from the N-terminus, the 201-residue chain is ATP-dependent Clp protease proteolytic subunit 1 (201 aa).

Serine 102 acts as the Nucleophile in catalysis. The active site involves histidine 127.

This sequence belongs to the peptidase S14 family. Fourteen ClpP subunits assemble into 2 heptameric rings which stack back to back to give a disk-like structure with a central cavity, resembling the structure of eukaryotic proteasomes.

The protein resides in the cytoplasm. The enzyme catalyses Hydrolysis of proteins to small peptides in the presence of ATP and magnesium. alpha-casein is the usual test substrate. In the absence of ATP, only oligopeptides shorter than five residues are hydrolyzed (such as succinyl-Leu-Tyr-|-NHMec, and Leu-Tyr-Leu-|-Tyr-Trp, in which cleavage of the -Tyr-|-Leu- and -Tyr-|-Trp bonds also occurs).. Functionally, cleaves peptides in various proteins in a process that requires ATP hydrolysis. Has a chymotrypsin-like activity. Plays a major role in the degradation of misfolded proteins. This chain is ATP-dependent Clp protease proteolytic subunit 1, found in Mesorhizobium japonicum (strain LMG 29417 / CECT 9101 / MAFF 303099) (Mesorhizobium loti (strain MAFF 303099)).